Consider the following 64-residue polypeptide: MKNLEIKRHYNLDYKNTNLLKKFVSVDGKILPKYITVLKPKNQRKLSKAIKLSRIAGLLKFLNN.

This sequence belongs to the bacterial ribosomal protein bS18 family. Part of the 30S ribosomal subunit.

The protein resides in the plastid. Its subcellular location is the chloroplast. The protein is Small ribosomal subunit protein bS18c (rps18) of Bigelowiella natans (Pedinomonas minutissima).